Consider the following 62-residue polypeptide: Large ribosomal subunit protein bL28 (62 aa).

This sequence belongs to the bacterial ribosomal protein bL28 family.

The chain is Large ribosomal subunit protein bL28 from Carboxydothermus hydrogenoformans (strain ATCC BAA-161 / DSM 6008 / Z-2901).